The sequence spans 165 residues: UPF0303 protein Bcep18194_A4700 (165 aa).

Belongs to the UPF0303 family.

The protein is UPF0303 protein Bcep18194_A4700 of Burkholderia lata (strain ATCC 17760 / DSM 23089 / LMG 22485 / NCIMB 9086 / R18194 / 383).